Reading from the N-terminus, the 461-residue chain is Pancreatic triacylglycerol lipase (461 aa).

Residues 1 to 12 form the signal peptide; sequence WTLSLLLGAVVG. 2 disulfide bridges follow: C16-C22 and C103-C114. Catalysis depends on S165, which acts as the Nucleophile. D189 serves as the catalytic Charge relay system. The Ca(2+) site is built by E200, R203, D205, and D208. A disulfide bond links C250 and C274. The active-site Charge relay system is H276. Cystine bridges form between C298–C309, C312–C317, and C445–C461. One can recognise a PLAT domain in the interval 351 to 461; that stretch reads WRYRVDVTLS…EDVLLTLTAC (111 aa).

It belongs to the AB hydrolase superfamily. Lipase family. Forms a 1:1 stoichiometric complex with (pro)colipase/CLPS.

Its subcellular location is the secreted. The enzyme catalyses a triacylglycerol + H2O = a diacylglycerol + a fatty acid + H(+). The catalysed reaction is 1,2,3-tributanoylglycerol + H2O = dibutanoylglycerol + butanoate + H(+). It carries out the reaction 1,2,3-tri-(9Z-octadecenoyl)-glycerol + H2O = di-(9Z)-octadecenoylglycerol + (9Z)-octadecenoate + H(+). It catalyses the reaction all-trans-retinyl hexadecanoate + H2O = all-trans-retinol + hexadecanoate + H(+). The enzyme catalyses 1,2-di-(9Z-octadecenoyl)-glycerol + H2O = (9Z-octadecenoyl)-glycerol + (9Z)-octadecenoate + H(+). Its activity is regulated as follows. Inhibited by bile salts, is reactivated by (pro)colipase/CLPS. Functionally, plays an important role in fat metabolism. It preferentially splits the esters of long-chain fatty acids at positions 1 and 3, producing mainly 2-monoacylglycerol and free fatty acids, and shows considerably higher activity against insoluble emulsified substrates than against soluble ones. The chain is Pancreatic triacylglycerol lipase (PNLIP) from Equus caballus (Horse).